A 780-amino-acid polypeptide reads, in one-letter code: ATP-dependent 6-phosphofructokinase, liver type (780 aa).

An N-acetylalanine modification is found at Ala2. Residues 2–390 are N-terminal catalytic PFK domain 1; it reads AAVDLEKLRA…NWNIYKLLAH (389 aa). Residues Gly25, 88-89, and 118-121 contribute to the ATP site; these read RC and GDGS. Mg(2+) is bound at residue Asp119. Residues 164–166, Arg201, 208–210, Glu264, Arg292, and 298–301 each bind substrate; these read SID, MGR, and HVQR. Residue Asp166 is the Proton acceptor of the active site. Ser377 is modified (phosphoserine). The segment at 391–400 is interdomain linker; it reads QKPPKEKSNF. The C-terminal regulatory PFK domain 2 stretch occupies residues 401 to 780; it reads SLAILNVGAP…RRTLSMDKGF (380 aa). Residues Arg470, 527–531, Arg565, 572–574, and Glu628 each bind beta-D-fructose 2,6-bisphosphate; these read TISNN and MGG. An O-linked (GlcNAc) serine glycan is attached at Ser529. Residue Tyr640 is modified to Phosphotyrosine. Residues Arg654, 660–663, and Arg734 each bind beta-D-fructose 2,6-bisphosphate; that span reads HLQQ. Ser775 carries the post-translational modification Phosphoserine.

This sequence belongs to the phosphofructokinase type A (PFKA) family. ATP-dependent PFK group I subfamily. Eukaryotic two domain clade 'E' sub-subfamily. In terms of assembly, homo- and heterotetramers. Phosphofructokinase (PFK) enzyme functions as a tetramer composed of different combinations of 3 types of subunits, called PFKM (where M stands for Muscle), PFKL (Liver) and PFKP (Platelet). The composition of the PFK tetramer differs according to the tissue type it is present in. In muscles, it is composed of 4 PFKM subunits (also called M4). In the liver, the predominant form is a tetramer of PFKL subunits (L4). In erythrocytes, both PFKM and PFKL subunits randomly tetramerize to form M4, L4 and other combinations (ML3, M2L2, M3L). The kinetic and regulatory properties of the tetrameric enzyme are dependent on the subunit composition, hence can vary across tissues. Mg(2+) is required as a cofactor. In terms of processing, glcNAcylation at Ser-529 by OGT decreases enzyme activity, leading to redirect glucose flux through the oxidative pentose phosphate pathway. Glycosylation is stimulated by both hypoxia and glucose deprivation.

Its subcellular location is the cytoplasm. It carries out the reaction beta-D-fructose 6-phosphate + ATP = beta-D-fructose 1,6-bisphosphate + ADP + H(+). Its pathway is carbohydrate degradation; glycolysis; D-glyceraldehyde 3-phosphate and glycerone phosphate from D-glucose: step 3/4. Its activity is regulated as follows. Allosterically activated by ADP, AMP, or fructose 2,6-bisphosphate, and allosterically inhibited by ATP or citrate. GlcNAcylation by OGT overcomes allosteric regulation. Catalyzes the phosphorylation of D-fructose 6-phosphate to fructose 1,6-bisphosphate by ATP, the first committing step of glycolysis. Negatively regulates the phagocyte oxidative burst in response to bacterial infection by controlling cellular NADPH biosynthesis and NADPH oxidase-derived reactive oxygen species. Upon macrophage activation, drives the metabolic switch toward glycolysis, thus preventing glucose turnover that produces NADPH via pentose phosphate pathway. This chain is ATP-dependent 6-phosphofructokinase, liver type, found in Homo sapiens (Human).